The following is a 110-amino-acid chain: Parvalbumin alpha (110 aa).

Position 2 is an N-acetylserine (Ser2). Ser2, Ser8, and Ser24 each carry phosphoserine. EF-hand domains are found at residues 39–74 (KSAD…FSSD) and 78–110 (LSAK…VAES). Positions 52, 54, 56, 58, 60, and 63 each coordinate Ca(2+). At Ser66 the chain carries Phosphoserine. Asp91, Asp93, Asp95, Lys97, and Glu102 together coordinate Ca(2+).

Its function is as follows. In muscle, parvalbumin is thought to be involved in relaxation after contraction. It binds two calcium ions. The chain is Parvalbumin alpha (Pvalb) from Rattus norvegicus (Rat).